Consider the following 277-residue polypeptide: Putative phosphoenolpyruvate synthase regulatory protein (277 aa).

157–164 contributes to the ADP binding site; it reads GVSRSGKT.

The protein belongs to the pyruvate, phosphate/water dikinase regulatory protein family. PSRP subfamily.

It carries out the reaction [pyruvate, water dikinase] + ADP = [pyruvate, water dikinase]-phosphate + AMP + H(+). The enzyme catalyses [pyruvate, water dikinase]-phosphate + phosphate + H(+) = [pyruvate, water dikinase] + diphosphate. Its function is as follows. Bifunctional serine/threonine kinase and phosphorylase involved in the regulation of the phosphoenolpyruvate synthase (PEPS) by catalyzing its phosphorylation/dephosphorylation. The sequence is that of Putative phosphoenolpyruvate synthase regulatory protein from Azoarcus sp. (strain BH72).